A 102-amino-acid polypeptide reads, in one-letter code: Small ribosomal subunit protein uS10 (102 aa).

The protein belongs to the universal ribosomal protein uS10 family. As to quaternary structure, part of the 30S ribosomal subunit.

Functionally, involved in the binding of tRNA to the ribosomes. The sequence is that of Small ribosomal subunit protein uS10 from Methanosarcina mazei (strain ATCC BAA-159 / DSM 3647 / Goe1 / Go1 / JCM 11833 / OCM 88) (Methanosarcina frisia).